The primary structure comprises 74 residues: Homeobox protein Hox-B8 (74 aa).

The span at 1–24 shows a compositional bias: low complexity; the sequence is YTDCKLAASGLGEEAESSEQSPSP. The segment at 1 to 28 is disordered; the sequence is YTDCKLAASGLGEEAESSEQSPSPTQLF. The Antp-type hexapeptide signature appears at 27–32; the sequence is LFPWMR. Positions 39 to 74 form a DNA-binding region, homeobox; the sequence is RRRGRQTYSRYQTLELEKEFLFNPYLTRKRRIEVSR.

Belongs to the Antp homeobox family.

It is found in the nucleus. Sequence-specific transcription factor which is part of a developmental regulatory system that provides cells with specific positional identities on the anterior-posterior axis. The chain is Homeobox protein Hox-B8 (HOXB8) from Gallus gallus (Chicken).